A 512-amino-acid polypeptide reads, in one-letter code: Cytochrome P450 98A1 (512 aa).

Residues 3-23 traverse the membrane as a helical segment; sequence ASLLLSVALAVVLIPLSLALL. Residue Cys-441 coordinates heme.

It belongs to the cytochrome P450 family. Requires heme as cofactor.

The protein localises to the membrane. This Sorghum bicolor (Sorghum) protein is Cytochrome P450 98A1 (CYP98A1).